We begin with the raw amino-acid sequence, 420 residues long: UDP-N-acetylglucosamine 1-carboxyvinyltransferase (420 aa).

Position 22–23 (22–23 (KN)) interacts with phosphoenolpyruvate. Arg93 contributes to the UDP-N-acetyl-alpha-D-glucosamine binding site. Cys117 serves as the catalytic Proton donor. Cys117 carries the post-translational modification 2-(S-cysteinyl)pyruvic acid O-phosphothioketal. UDP-N-acetyl-alpha-D-glucosamine contacts are provided by Asp307 and Ile329.

This sequence belongs to the EPSP synthase family. MurA subfamily.

It localises to the cytoplasm. It carries out the reaction phosphoenolpyruvate + UDP-N-acetyl-alpha-D-glucosamine = UDP-N-acetyl-3-O-(1-carboxyvinyl)-alpha-D-glucosamine + phosphate. It participates in cell wall biogenesis; peptidoglycan biosynthesis. Functionally, cell wall formation. Adds enolpyruvyl to UDP-N-acetylglucosamine. The polypeptide is UDP-N-acetylglucosamine 1-carboxyvinyltransferase (Alteromonas mediterranea (strain DSM 17117 / CIP 110805 / LMG 28347 / Deep ecotype)).